A 435-amino-acid chain; its full sequence is Amidase 1 (435 aa).

Residues lysine 38 and serine 115 each act as charge relay system in the active site. Residue serine 139 is the Acyl-ester intermediate of the active site.

This sequence belongs to the amidase family.

The protein localises to the cytoplasm. The protein resides in the nucleus. It localises to the nucleoplasm. The enzyme catalyses a monocarboxylic acid amide + H2O = a monocarboxylate + NH4(+). In terms of biological role, amidase involved in auxin biosynthesis. Converts indole-3-acetamide (IAM) to indole-3-acetate, and phenyl-2-acetamide (PAM) to phenyl-2-acetate. Substrate preference is PAM &gt; IAM. This Oryza sativa subsp. japonica (Rice) protein is Amidase 1.